Consider the following 210-residue polypeptide: Calcium-activated potassium channel subunit beta-4 (210 aa).

Residues 1 to 19 (MAKLRVSYEYTEAEDKSIR) lie on the Cytoplasmic side of the membrane. A helical transmembrane segment spans residues 20-40 (LGLFLIVSGILSLFIFGFCWL). The Extracellular segment spans residues 41–167 (SPALQDLQAT…DVLLQRTHDE (127 aa)). N-linked (GlcNAc...) asparagine glycosylation is found at Asn53 and Asn90. The chain crosses the membrane as a helical span at residues 168–188 (IVLLHCFLWPVVAFVVGVLIV). Residues 189 to 210 (VLTICAKSLAVKAEAMKKRKFS) lie on the Cytoplasmic side of the membrane.

The protein belongs to the KCNMB (TC 8.A.14.1) family. KCNMB4 subfamily. As to quaternary structure, interacts with KCNMA1 tetramer. There are probably 4 molecules of KCMNB4 per KCNMA1 tetramer. Interacts with FMR1 (via N-terminus). Phosphorylated. Phosphorylation modulates its effect on KCNMA1 activation kinetics. In terms of processing, N-glycosylated. A highly glycosylated form is promoted by KCNMA1. Glycosylation, which is not required for the interaction with KCNMA1 and subcellular location, increases protection against charybdotoxin.

The protein resides in the membrane. In terms of biological role, regulatory subunit of the calcium activated potassium KCNMA1 (maxiK) channel. Modulates the calcium sensitivity and gating kinetics of KCNMA1, thereby contributing to KCNMA1 channel diversity. Decreases the gating kinetics and calcium sensitivity of the KCNMA1 channel, but with fast deactivation kinetics. May decrease KCNMA1 channel openings at low calcium concentrations but increases channel openings at high calcium concentrations. Makes KCNMA1 channel resistant to 100 nM charybdotoxin (CTX) toxin concentrations. This is Calcium-activated potassium channel subunit beta-4 (Kcnmb4) from Rattus norvegicus (Rat).